The chain runs to 297 residues: Probable E3 SUMO-protein ligase RNF212 (297 aa).

The RING-type zinc-finger motif lies at 7–46; sequence CNRCFQPPHRTSCFSLTNCGHVYCDACLGKGKKNECLICK. The stretch at 91 to 124 forms a coiled coil; the sequence is RKRLLAFYREKISRLEESLRKSVLQIEQLQSMRS.

Its subcellular location is the nucleus. The protein resides in the chromosome. It functions in the pathway protein modification; protein sumoylation. SUMO E3 ligase that acts as a regulator of crossing-over during meiosis: required to couple chromosome synapsis to the formation of crossover-specific recombination complexes. Localizes to recombination sites and stabilizes meiosis-specific recombination factors, such as MutS-gamma complex proteins (MSH4 and MSH5) and TEX11. May mediate sumoylation of target proteins MSH4 and/or MSH5, leading to enhance their binding to recombination sites. Acts as a limiting factor for crossover designation and/or reinforcement and plays an antagonist role with CCNB1IP1/HEI10 in the regulation of meiotic recombination. This Homo sapiens (Human) protein is Probable E3 SUMO-protein ligase RNF212 (RNF212).